A 301-amino-acid polypeptide reads, in one-letter code: Acetylglutamate kinase (301 aa).

Residues 68–69 (GG), arginine 90, and asparagine 195 each bind substrate.

Belongs to the acetylglutamate kinase family. ArgB subfamily.

It localises to the cytoplasm. The enzyme catalyses N-acetyl-L-glutamate + ATP = N-acetyl-L-glutamyl 5-phosphate + ADP. It participates in amino-acid biosynthesis; L-arginine biosynthesis; N(2)-acetyl-L-ornithine from L-glutamate: step 2/4. Catalyzes the ATP-dependent phosphorylation of N-acetyl-L-glutamate. This chain is Acetylglutamate kinase, found in Pseudomonas fluorescens (strain ATCC BAA-477 / NRRL B-23932 / Pf-5).